The following is a 90-amino-acid chain: Cell division topological specificity factor (90 aa).

The protein belongs to the MinE family.

Its function is as follows. Prevents the cell division inhibition by proteins MinC and MinD at internal division sites while permitting inhibition at polar sites. This ensures cell division at the proper site by restricting the formation of a division septum at the midpoint of the long axis of the cell. The protein is Cell division topological specificity factor of Clostridium perfringens (strain SM101 / Type A).